The following is a 182-amino-acid chain: Large ribosomal subunit protein uL22 (182 aa).

Residues 159 to 182 (AAAKPKATAKKATGEKSKAKTKAN) form a disordered region.

This sequence belongs to the universal ribosomal protein uL22 family. In terms of assembly, part of the 50S ribosomal subunit.

Functionally, this protein binds specifically to 23S rRNA; its binding is stimulated by other ribosomal proteins, e.g. L4, L17, and L20. It is important during the early stages of 50S assembly. It makes multiple contacts with different domains of the 23S rRNA in the assembled 50S subunit and ribosome. Its function is as follows. The globular domain of the protein is located near the polypeptide exit tunnel on the outside of the subunit, while an extended beta-hairpin is found that lines the wall of the exit tunnel in the center of the 70S ribosome. The protein is Large ribosomal subunit protein uL22 of Cytophaga hutchinsonii (strain ATCC 33406 / DSM 1761 / CIP 103989 / NBRC 15051 / NCIMB 9469 / D465).